The chain runs to 294 residues: ATP synthase gamma chain (294 aa).

It belongs to the ATPase gamma chain family. As to quaternary structure, F-type ATPases have 2 components, CF(1) - the catalytic core - and CF(0) - the membrane proton channel. CF(1) has five subunits: alpha(3), beta(3), gamma(1), delta(1), epsilon(1). CF(0) has three main subunits: a, b and c.

The protein localises to the cell inner membrane. Functionally, produces ATP from ADP in the presence of a proton gradient across the membrane. The gamma chain is believed to be important in regulating ATPase activity and the flow of protons through the CF(0) complex. The polypeptide is ATP synthase gamma chain (Paraburkholderia xenovorans (strain LB400)).